The following is a 187-amino-acid chain: Large ribosomal subunit protein uL22 (187 aa).

The protein belongs to the universal ribosomal protein uL22 family.

The sequence is that of Large ribosomal subunit protein uL22 (RPL17) from Theileria annulata.